The chain runs to 245 residues: 1-(5-phosphoribosyl)-5-[(5-phosphoribosylamino)methylideneamino] imidazole-4-carboxamide isomerase (245 aa).

Asp8 acts as the Proton acceptor in catalysis. Catalysis depends on Asp129, which acts as the Proton donor.

This sequence belongs to the HisA/HisF family.

It localises to the cytoplasm. It catalyses the reaction 1-(5-phospho-beta-D-ribosyl)-5-[(5-phospho-beta-D-ribosylamino)methylideneamino]imidazole-4-carboxamide = 5-[(5-phospho-1-deoxy-D-ribulos-1-ylimino)methylamino]-1-(5-phospho-beta-D-ribosyl)imidazole-4-carboxamide. It participates in amino-acid biosynthesis; L-histidine biosynthesis; L-histidine from 5-phospho-alpha-D-ribose 1-diphosphate: step 4/9. The protein is 1-(5-phosphoribosyl)-5-[(5-phosphoribosylamino)methylideneamino] imidazole-4-carboxamide isomerase of Rhodopseudomonas palustris (strain HaA2).